Reading from the N-terminus, the 159-residue chain is Small ribosomal subunit protein uS17x (159 aa).

Belongs to the universal ribosomal protein uS17 family.

The protein resides in the cytoplasm. The polypeptide is Small ribosomal subunit protein uS17x (RPS11C) (Arabidopsis thaliana (Mouse-ear cress)).